A 416-amino-acid chain; its full sequence is Serine hydroxymethyltransferase (416 aa).

(6S)-5,6,7,8-tetrahydrofolate is bound by residues Leu121 and 125-127; that span reads GHL. Lys229 is modified (N6-(pyridoxal phosphate)lysine).

This sequence belongs to the SHMT family. In terms of assembly, homodimer. Requires pyridoxal 5'-phosphate as cofactor.

Its subcellular location is the cytoplasm. The catalysed reaction is (6R)-5,10-methylene-5,6,7,8-tetrahydrofolate + glycine + H2O = (6S)-5,6,7,8-tetrahydrofolate + L-serine. It functions in the pathway one-carbon metabolism; tetrahydrofolate interconversion. Its pathway is amino-acid biosynthesis; glycine biosynthesis; glycine from L-serine: step 1/1. Its function is as follows. Catalyzes the reversible interconversion of serine and glycine with tetrahydrofolate (THF) serving as the one-carbon carrier. This reaction serves as the major source of one-carbon groups required for the biosynthesis of purines, thymidylate, methionine, and other important biomolecules. Also exhibits THF-independent aldolase activity toward beta-hydroxyamino acids, producing glycine and aldehydes, via a retro-aldol mechanism. In Neisseria gonorrhoeae, this protein is Serine hydroxymethyltransferase.